A 507-amino-acid polypeptide reads, in one-letter code: ATP synthase subunit alpha (507 aa).

Residue 168–175 coordinates ATP; it reads GDRKTGKT.

The protein belongs to the ATPase alpha/beta chains family. In terms of assembly, F-type ATPases have 2 components, CF(1) - the catalytic core - and CF(0) - the membrane proton channel. CF(1) has five subunits: alpha(3), beta(3), gamma(1), delta(1), epsilon(1). CF(0) has three main subunits: a(1), b(2) and c(9-12). The alpha and beta chains form an alternating ring which encloses part of the gamma chain. CF(1) is attached to CF(0) by a central stalk formed by the gamma and epsilon chains, while a peripheral stalk is formed by the delta and b chains.

The protein localises to the cell inner membrane. The catalysed reaction is ATP + H2O + 4 H(+)(in) = ADP + phosphate + 5 H(+)(out). Functionally, produces ATP from ADP in the presence of a proton gradient across the membrane. The alpha chain is a regulatory subunit. This Ehrlichia ruminantium (strain Gardel) protein is ATP synthase subunit alpha.